Reading from the N-terminus, the 238-residue chain is Ribonuclease PH (238 aa).

Residues R86 and 124-126 (GTR) each bind phosphate.

This sequence belongs to the RNase PH family. As to quaternary structure, homohexameric ring arranged as a trimer of dimers.

It catalyses the reaction tRNA(n+1) + phosphate = tRNA(n) + a ribonucleoside 5'-diphosphate. Functionally, phosphorolytic 3'-5' exoribonuclease that plays an important role in tRNA 3'-end maturation. Removes nucleotide residues following the 3'-CCA terminus of tRNAs; can also add nucleotides to the ends of RNA molecules by using nucleoside diphosphates as substrates, but this may not be physiologically important. Probably plays a role in initiation of 16S rRNA degradation (leading to ribosome degradation) during starvation. The sequence is that of Ribonuclease PH from Yersinia pseudotuberculosis serotype O:1b (strain IP 31758).